Here is a 152-residue protein sequence, read N- to C-terminus: uncharacterized protein (152 aa).

Positions 1-23 are cleaved as a signal peptide; it reads MYSILIACLVLLLCLVIYVGHRA.

Belongs to the asfivirus EP152R family.

The protein resides in the virion. This is an uncharacterized protein from Ornithodoros (relapsing fever ticks).